A 316-amino-acid polypeptide reads, in one-letter code: Arginase-1 (316 aa).

The tract at residues 1 to 26 (MAKERHSVGVIGAPFSKGQPRRGVEE) is disordered. Positions 101, 124, 126, and 128 each coordinate Mn(2+). Residues 126 to 130 (HADIN), 137 to 139 (CGN), and aspartate 183 each bind substrate. Residues aspartate 232 and aspartate 234 each contribute to the Mn(2+) site. Threonine 246 lines the substrate pocket.

The protein belongs to the arginase family. In terms of assembly, homotrimer. Requires Mn(2+) as cofactor. As to expression, strongest expression in liver.

It carries out the reaction L-arginine + H2O = urea + L-ornithine. It participates in nitrogen metabolism; urea cycle; L-ornithine and urea from L-arginine: step 1/1. In Xenopus laevis (African clawed frog), this protein is Arginase-1 (arg1).